The following is a 1434-amino-acid chain: Probable ATP-dependent RNA helicase spindle-E (1434 aa).

The interval 66–86 (VGGPSNTKRTKTLDELESDDD) is disordered. One can recognise a Helicase ATP-binding domain in the interval 127–294 (MKAIKENPVV…FASCKSMPPV (168 aa)). 140-147 (GETGCGKT) is an ATP binding site. The DEAH box motif lies at 240–243 (DEVH). Residues 354–526 (QSEQSYEEAK…SSVLKAKELD (173 aa)) enclose the Helicase C-terminal domain. In terms of domain architecture, Tudor spans 938 to 1001 (ASAITKGLQL…RLMRHELRRD (64 aa)).

The protein belongs to the DEAD box helicase family. DEAH subfamily.

The protein localises to the cytoplasm. It catalyses the reaction ATP + H2O = ADP + phosphate + H(+). Functionally, probable ATP-binding RNA helicase which plays a central role during spermatogenesis and oogenesis by repressing transposable elements and preventing their mobilization, which is essential for the germline integrity. Acts via the piRNA metabolic process, which mediates the repression of transposable elements during meiosis by forming complexes composed of piRNAs and Piwi and govern the methylation and subsequent repression of transposons. Involved in the repression of LTR retrotransposon copia. Also involved in telomere regulation by repressing specialized telomeric retroelements HeT-A, TAHRE, and TART; Drosophila telomeres being maintained by transposition of specialized telomeric retroelements. Involved in telomeric trans-silencing, a repression mechanism by which a transposon or a transgene inserted in subtelomeric heterochromatin has the capacity to repress in trans in the female germline, a homologous transposon, or transgene located in euchromatin. Involved in the repression of testis-expressed Stellate genes by the homologous Su(Ste) repeats. Required for anteroposterior and dorsoventral axis formation during oogenesis. The chain is Probable ATP-dependent RNA helicase spindle-E (spn-E) from Drosophila grimshawi (Hawaiian fruit fly).